Here is a 384-residue protein sequence, read N- to C-terminus: MADEIATLISSAGLTNETFLVLCVIAVIVIGAIVVIITSRPILDIYPYLTPSASVRARKGRLFDEKQLSEIVETNNVHEFENYLKGVPDYADVLEEYPVDKALDIQCADTYEFVARIAPKEIRSSFVVMSKKTDINNIKSLLTAKEVGLTEEETEDLLIPRGVLYEDLRSLIDADGVTDVVTSLDGTEYAAVLEDALPKYENSGMVLALESALDKYYLESLLRSSNVPADENKQILFSYVGTQVDIANLKLIIRAKKDNLSYDDIAPYILEDGYQLREWKLKDLMESPDVTNVISGLEGTKYSDVLTDAMAKYNENASIAVFEKALDAYLSKSAKSLSMKKPLGIGPIIGYVSQKETEIKNLKIIARAKREAGFPNSKIMEMLI.

Belongs to the V-ATPase V0D/AC39 subunit family. In terms of assembly, has multiple subunits with at least A(3), B(3), C, D, E, F, H, I and proteolipid K(x).

The protein localises to the cell membrane. In terms of biological role, component of the A-type ATP synthase that produces ATP from ADP in the presence of a proton gradient across the membrane. The protein is A-type ATP synthase subunit C of Methanobrevibacter smithii (strain ATCC 35061 / DSM 861 / OCM 144 / PS).